The following is a 329-amino-acid chain: Probable carboxylesterase 8 (329 aa).

Positions 73 to 75 (HGG) match the Involved in the stabilization of the negatively charged intermediate by the formation of the oxyanion hole motif. Catalysis depends on residues serine 161, aspartate 264, and histidine 294.

This sequence belongs to the 'GDXG' lipolytic enzyme family. In terms of tissue distribution, expressed in leaves, stems, flowers and siliques.

It catalyses the reaction a carboxylic ester + H2O = an alcohol + a carboxylate + H(+). Its function is as follows. Carboxylesterase acting on esters with varying acyl chain length. This is Probable carboxylesterase 8 (CXE8) from Arabidopsis thaliana (Mouse-ear cress).